A 453-amino-acid chain; its full sequence is Protein IVY1 (453 aa).

Over residues 1–16 (MPDNNTEQLQGSPSSD) the composition is skewed to polar residues. The disordered stretch occupies residues 1 to 20 (MPDNNTEQLQGSPSSDQRLR). Phosphoserine occurs at positions 59, 84, and 85. Coiled coils occupy residues 102-122 (KRDVKETQEALSTLLRNSNAY) and 230-257 (IRNLISYRESLSSLQARLDQLETLKHDF). 2 disordered regions span residues 316 to 340 (DGPYGTIGGDGETAGEAYNSDEETG) and 353 to 453 (TSQP…SSNI). Phosphoserine is present on S335. A compositionally biased stretch (low complexity) spans 353-371 (TSQPSTSKTSLPKSKGSST). Polar residues-rich tracts occupy residues 372–384 (VSTPNHSQSSSNK) and 404–429 (LMGTENSFSLPPTRNSAEETTQTFKQ). The segment covering 431–442 (SIKEDNDNHSSD) has biased composition (basic and acidic residues). The span at 443 to 453 (TDGMQDQSSNI) shows a compositional bias: polar residues.

Homomultimer. Interacts with YPT7 and VPS33.

It is found in the vacuole membrane. In terms of biological role, may be required for vacuolar fusion. Overexpression leads to fragmentation of vacuoles, missorting of the vacuolar enzyme carboxypeptidase Y (CPY) to the exterior of the cell and accumulation of multivesicular bodies inside the cell. The chain is Protein IVY1 (IVY1) from Saccharomyces cerevisiae (strain ATCC 204508 / S288c) (Baker's yeast).